The sequence spans 506 residues: Histidine ammonia-lyase (506 aa).

Positions 143 to 145 (ASG) form a cross-link, 5-imidazolinone (Ala-Gly). Position 144 is a 2,3-didehydroalanine (Ser) (Ser-144).

This sequence belongs to the PAL/histidase family. Contains an active site 4-methylidene-imidazol-5-one (MIO), which is formed autocatalytically by cyclization and dehydration of residues Ala-Ser-Gly.

The protein resides in the cytoplasm. The enzyme catalyses L-histidine = trans-urocanate + NH4(+). Its pathway is amino-acid degradation; L-histidine degradation into L-glutamate; N-formimidoyl-L-glutamate from L-histidine: step 1/3. The protein is Histidine ammonia-lyase of Citrobacter koseri (strain ATCC BAA-895 / CDC 4225-83 / SGSC4696).